The following is a 483-amino-acid chain: Altronate oxidoreductase (483 aa).

18 to 29 (IIQFGEGNFLRA) contacts NAD(+).

This sequence belongs to the mannitol dehydrogenase family. UxaB subfamily.

The enzyme catalyses D-altronate + NAD(+) = keto-D-tagaturonate + NADH + H(+). It functions in the pathway carbohydrate metabolism; pentose and glucuronate interconversion. The chain is Altronate oxidoreductase (uxaB) from Escherichia coli O157:H7.